A 136-amino-acid polypeptide reads, in one-letter code: Large ribosomal subunit protein eL27 (136 aa).

Residues 5–40 form the KOW domain; it reads MKPGKVVLVLAGRYSGRKAVIVKNIDDGTSDRPYSH. N6-acetyllysine occurs at positions 27 and 93.

This sequence belongs to the eukaryotic ribosomal protein eL27 family. Component of the large ribosomal subunit. Interacts with RRP1B. Component of the large ribosomal subunit. Interacts with RRP1B. Interacts with DHX33.

The protein resides in the cytoplasm. Its subcellular location is the cytosol. The protein localises to the rough endoplasmic reticulum. Functionally, component of the large ribosomal subunit. Required for proper rRNA processing and maturation of 28S and 5.8S rRNAs. In Bos taurus (Bovine), this protein is Large ribosomal subunit protein eL27 (RPL27).